The primary structure comprises 451 residues: Glycine--tRNA ligase (451 aa).

The substrate site is built by arginine 94 and glutamate 164. ATP-binding positions include 196–198 (RNE), 206–211 (FRTREF), 281–282 (EL), and 325–328 (GVER). 211 to 215 (FEQME) serves as a coordination point for substrate. Residue 321-325 (EPSVG) participates in substrate binding.

It belongs to the class-II aminoacyl-tRNA synthetase family. In terms of assembly, homodimer.

The protein localises to the cytoplasm. The catalysed reaction is tRNA(Gly) + glycine + ATP = glycyl-tRNA(Gly) + AMP + diphosphate. In terms of biological role, catalyzes the attachment of glycine to tRNA(Gly). In Mesoplasma florum (strain ATCC 33453 / NBRC 100688 / NCTC 11704 / L1) (Acholeplasma florum), this protein is Glycine--tRNA ligase.